The sequence spans 128 residues: Gastrotropin (128 aa).

An N-acetylalanine modification is found at A2.

It belongs to the calycin superfamily. Fatty-acid binding protein (FABP) family. Expressed in ileum.

The protein localises to the cytoplasm. The protein resides in the membrane. Its function is as follows. Binds to bile acids and is involved in enterohepatic bile acid metabolism. Required for efficient apical to basolateral transport of conjugated bile acids in ileal enterocytes. Stimulates gastric acid and pepsinogen secretion. This Oryctolagus cuniculus (Rabbit) protein is Gastrotropin (FABP6).